A 215-amino-acid polypeptide reads, in one-letter code: LysM and putative peptidoglycan-binding domain-containing protein 2 (215 aa).

The disordered stretch occupies residues Met1–Leu40. Ala2 is modified (N-acetylalanine). Ser5, Ser24, Ser33, and Ser57 each carry phosphoserine. The 45-residue stretch at Val71–Ile115 folds into the LysM domain. Disordered regions lie at residues Glu135–Ala176 and Arg195–Ser215. Residues Gln145 to Leu156 are compositionally biased toward acidic residues. Residues Pro157–Ala169 show a composition bias toward pro residues. The segment covering Lys196 to Glu205 has biased composition (basic and acidic residues).

In Mus musculus (Mouse), this protein is LysM and putative peptidoglycan-binding domain-containing protein 2 (Lysmd2).